The primary structure comprises 187 residues: UPF0301 protein VS_2679 (187 aa).

The protein belongs to the UPF0301 (AlgH) family.

The protein is UPF0301 protein VS_2679 of Vibrio atlanticus (strain LGP32) (Vibrio splendidus (strain Mel32)).